Reading from the N-terminus, the 187-residue chain is Large ribosomal subunit protein bL17 (187 aa).

A disordered region spans residues 122–187; it reads PKVRSSRTST…EADAAEKSDK (66 aa). Residues 127–144 are compositionally biased toward low complexity; sequence SRTSTATAPAAAAPAAEA. 2 stretches are compositionally biased toward acidic residues: residues 145 to 157 and 165 to 180; these read PAEE…EETD and TPAE…VEAD.

Belongs to the bacterial ribosomal protein bL17 family. As to quaternary structure, part of the 50S ribosomal subunit. Contacts protein L32.

The chain is Large ribosomal subunit protein bL17 from Clavibacter michiganensis subsp. michiganensis (strain NCPPB 382).